Reading from the N-terminus, the 119-residue chain is Ribonuclease P protein component (119 aa).

The protein belongs to the RnpA family. In terms of assembly, consists of a catalytic RNA component (M1 or rnpB) and a protein subunit.

The catalysed reaction is Endonucleolytic cleavage of RNA, removing 5'-extranucleotides from tRNA precursor.. Its function is as follows. RNaseP catalyzes the removal of the 5'-leader sequence from pre-tRNA to produce the mature 5'-terminus. It can also cleave other RNA substrates such as 4.5S RNA. The protein component plays an auxiliary but essential role in vivo by binding to the 5'-leader sequence and broadening the substrate specificity of the ribozyme. In Streptococcus pyogenes serotype M12 (strain MGAS2096), this protein is Ribonuclease P protein component.